A 258-amino-acid chain; its full sequence is Tritrans,polycis-undecaprenyl-diphosphate synthase (geranylgeranyl-diphosphate specific) (258 aa).

Asp-37 is a catalytic residue. Mg(2+) is bound at residue Asp-37. Substrate contacts are provided by residues 38–41 (GNRR), His-54, and 82–84 (STE). The Proton acceptor role is filled by Asn-85. Substrate-binding positions include Phe-86, Arg-88, Arg-207, and 213-215 (RIS). Glu-226 lines the Mg(2+) pocket.

Belongs to the UPP synthase family. As to quaternary structure, homodimer. The cofactor is Mg(2+).

The enzyme catalyses geranylgeranyl diphosphate + 7 isopentenyl diphosphate = tri-trans,hepta-cis-undecaprenyl diphosphate + 7 diphosphate. Catalyzes the sequential condensation of isopentenyl diphosphate (IPP) with geranylgeranyl diphosphate (GGPP) to yield (2Z,6Z,10Z,14Z,18Z,22Z,26Z,30E,34E,38E)-undecaprenyl diphosphate (tritrans,heptacis-UPP). It is probably the precursor of glycosyl carrier lipids. The protein is Tritrans,polycis-undecaprenyl-diphosphate synthase (geranylgeranyl-diphosphate specific) of Thermoplasma volcanium (strain ATCC 51530 / DSM 4299 / JCM 9571 / NBRC 15438 / GSS1).